The primary structure comprises 272 residues: Orotidine 5'-phosphate decarboxylase (272 aa).

Lysine 93 functions as the Proton donor in the catalytic mechanism.

This sequence belongs to the OMP decarboxylase family. Type 2 subfamily.

It carries out the reaction orotidine 5'-phosphate + H(+) = UMP + CO2. Its pathway is pyrimidine metabolism; UMP biosynthesis via de novo pathway; UMP from orotate: step 2/2. The polypeptide is Orotidine 5'-phosphate decarboxylase (Roseiflexus sp. (strain RS-1)).